A 97-amino-acid polypeptide reads, in one-letter code: UPF0223 protein lp_2149 (97 aa).

The protein belongs to the UPF0223 family.

This chain is UPF0223 protein lp_2149, found in Lactiplantibacillus plantarum (strain ATCC BAA-793 / NCIMB 8826 / WCFS1) (Lactobacillus plantarum).